The following is a 330-amino-acid chain: MMRGCHICKLPGRVMGIRVLRFSLVVILVLLLVAGALTNLLPNIKEDKMLTLRREIKSPSKSALDSFTLIMQTYNRTDLLLRLLNHYQAVPSLHKVIVVWNNVGEKGPEELWNSLGPHPIPVIFKPQTANKMRNRLQVFPEVETNAVLMVDDDTLISAQDLVFAFSIWQQFPDQIIGFVPRKHVSTSSGIYSYGGFELQTPGPGNGDQYSMVLIGASFFNSKYLELFQKQPAAVHALIDETQNCDDIAMNFLVTRHTGKPSGIFVKPINMVNLEKETNGYSGMWHRAEHFLQRSYCINKLVNIYDGMPLKYSNIMISQFGFPYANHKSKM.

Topologically, residues 1–21 (MMRGCHICKLPGRVMGIRVLR) are cytoplasmic. The chain crosses the membrane as a helical; Signal-anchor for type II membrane protein span at residues 22–42 (FSLVVILVLLLVAGALTNLLP). At 43-330 (NIKEDKMLTL…FPYANHKSKM (288 aa)) the chain is on the lumenal side. Residue Q72 participates in UDP-N-acetyl-alpha-D-galactosamine binding. Q72 is a UDP-N-acetyl-alpha-D-glucosamine binding site. N75 carries an N-linked (GlcNAc...) asparagine glycan. Positions 76, 101, 130, 135, 151, 152, 153, and 245 each coordinate UDP-N-acetyl-alpha-D-galactosamine. Positions 76, 101, 130, 135, 151, 152, 153, 245, 246, and 293 each coordinate UDP-N-acetyl-alpha-D-glucosamine. Position 153 (D153) interacts with Mn(2+). C244 and C296 are oxidised to a cystine. Residue D246 is part of the active site. Position 293 (R293) interacts with UDP-N-acetyl-alpha-D-galactosamine.

The protein belongs to the glycosyltransferase 47 family. Mn(2+) serves as cofactor.

It localises to the endoplasmic reticulum membrane. It carries out the reaction 3-O-(beta-D-GlcA-(1-&gt;3)-beta-D-Gal-(1-&gt;3)-beta-D-Gal-(1-&gt;4)-beta-D-Xyl)-L-seryl-[protein] + UDP-N-acetyl-alpha-D-glucosamine = 3-O-(alpha-D-GlcNAc-(1-&gt;4)-beta-D-GlcA-(1-&gt;3)-beta-D-Gal-(1-&gt;3)-beta-D-Gal-(1-&gt;4)-beta-D-Xyl)-L-seryl-[protein] + UDP + H(+). Glycosyltransferase required for the biosynthesis of heparan-sulfate and responsible for the alternating addition of beta-1-4-linked glucuronic acid (GlcA) and alpha-1-4-linked N-acetylglucosamine (GlcNAc) units to nascent heparan sulfate chains. The chain is Exostosin-like 2 (Extl2) from Mus musculus (Mouse).